The primary structure comprises 279 residues: Phycobilisome rod-core linker polypeptide CpcG1 (279 aa).

Residues 11 to 189 (TTQNQRVEGY…YWRNRLLEQF (179 aa)) form the PBS-linker domain.

Belongs to the phycobilisome linker protein family. As to quaternary structure, the phycobilisome is a hemidiscoidal structure that is composed of two distinct substructures: a core complex and a number of rods radiating from the core.

The protein resides in the cellular thylakoid membrane. Rod-core linker protein required for attachment of phycocyanin to allophycocyanin in cores of phycobilisomes. Its function is as follows. Linker polypeptides determine the state of aggregation and the location of the disk-shaped phycobiliprotein units within the phycobilisome and modulate their spectroscopic properties in order to mediate a directed and optimal energy transfer. The chain is Phycobilisome rod-core linker polypeptide CpcG1 (cpcG1) from Mastigocladus laminosus (Fischerella sp.).